The sequence spans 697 residues: Sialidase B (697 aa).

Positions 1–29 (MNKRGLYSKLGISVVGISLLMGVPTLIHA) are cleaved as a signal peptide. R245 contributes to the substrate binding site. D270 acts as the Proton acceptor in catalysis. BNR repeat units follow at residues 280–291 (SYSDDNGKTWSE), 462–473 (TTSQNRGESWEQ), and 517–528 (LISDDSGQTWKK). E541 is a catalytic residue. A substrate-binding site is contributed by R557. The stretch at 566–577 (MTSRDSGETWSK) is one BNR 4 repeat. R619 lines the substrate pocket. Y653 acts as the Nucleophile in catalysis.

Belongs to the glycosyl hydrolase 33 family.

It carries out the reaction Hydrolysis of alpha-(2-&gt;3)-, alpha-(2-&gt;6)-, alpha-(2-&gt;8)- glycosidic linkages of terminal sialic acid residues in oligosaccharides, glycoproteins, glycolipids, colominic acid and synthetic substrates.. The sequence is that of Sialidase B (nanB) from Streptococcus pneumoniae serotype 4 (strain ATCC BAA-334 / TIGR4).